Consider the following 401-residue polypeptide: S-adenosylmethionine synthase (401 aa).

His-15 provides a ligand contact to ATP. Residue Asp-17 participates in Mg(2+) binding. Residue Glu-48 coordinates K(+). 2 residues coordinate L-methionine: Glu-61 and Gln-104. The segment at 104 to 114 is flexible loop; that stretch reads QSPDIALGVDR. ATP is bound by residues 179-181, 246-247, Asp-255, 261-262, Ala-278, and Lys-282; these read DGK, RF, and RK. L-methionine is bound at residue Asp-255. An L-methionine-binding site is contributed by Lys-286.

This sequence belongs to the AdoMet synthase family. In terms of assembly, homotetramer; dimer of dimers. Mg(2+) serves as cofactor. The cofactor is K(+).

Its subcellular location is the cytoplasm. It catalyses the reaction L-methionine + ATP + H2O = S-adenosyl-L-methionine + phosphate + diphosphate. It participates in amino-acid biosynthesis; S-adenosyl-L-methionine biosynthesis; S-adenosyl-L-methionine from L-methionine: step 1/1. In terms of biological role, catalyzes the formation of S-adenosylmethionine (AdoMet) from methionine and ATP. The overall synthetic reaction is composed of two sequential steps, AdoMet formation and the subsequent tripolyphosphate hydrolysis which occurs prior to release of AdoMet from the enzyme. This Petrotoga mobilis (strain DSM 10674 / SJ95) protein is S-adenosylmethionine synthase.